The chain runs to 482 residues: MAAARVLRTWSQNAVRLTCVRYFQTFNSARVLKPKCVCSVGYPLFKYSQPRHSLRTAAVLQGQVVQFKLSDIGEGIREVTIKEWYVKEGDTVSQFDSICEVQSDKASVTITSRYDGVIKRLYYNLDDIAYVGKPLIDIETEALKDSEEDVVETPAVSHDEHTHQEIKGQKTLATPAVRRLAMENNIKLSEVVGSGKDGRILKEDILSFLEKQTGAILPPSPKSEITPPPPQPKDRTFPTPIAKPPVFTGKDRTEPVTGFQKAMVKTMSAALKIPHFGYCDEIDLTQLVKLREELKPVALARGIKLSFMPFFLKAASLGLLQFPILNASVDENCQNITYKASHNIGIAMDTELGLIVPNVKNVQVRSVFEIAMELNRLQKLGSSGQLGTTDLTGGTFTLSNIGSIGGTYAKPVILPPEVAIGALGAIKALPRFDQKGDVYKAQIMNVSWSADHRVIDGATMSRFSNLWKSYLENPAFMLLDLK.

The N-terminal 61 residues, 1 to 61 (MAAARVLRTW…HSLRTAAVLQ (61 aa)), are a transit peptide targeting the mitochondrion. Positions 64–139 (VVQFKLSDIG…YVGKPLIDIE (76 aa)) constitute a Lipoyl-binding domain. An N6-lipoyllysine modification is found at K105. The residue at position 133 (K133) is an N6-succinyllysine. The segment at 145–160 (DSEEDVVETPAVSHDE) is critical for association with PPM1K. Residues 172–209 (LATPAVRRLAMENNIKLSEVVGSGKDGRILKEDILSFL) form the Peripheral subunit-binding (PSBD) domain. The residue at position 196 (K196) is an N6-acetyllysine; alternate. N6-succinyllysine; alternate is present on K196. K202 bears the N6-acetyllysine mark. The disordered stretch occupies residues 217-252 (LPPSPKSEITPPPPQPKDRTFPTPIAKPPVFTGKDR). The segment covering 218 to 231 (PPSPKSEITPPPPQ) has biased composition (pro residues). S220 carries the post-translational modification Phosphoserine. Residues K243 and K250 each carry the N6-acetyllysine modification. K261 is modified (N6-succinyllysine). K289 is subject to N6-acetyllysine; alternate. K289 is modified (N6-succinyllysine; alternate). CoA is bound at residue R291. N6-acetyllysine is present on residues K295 and K304. Residues S306, D349, Q378, S399, N400, S403, G424, and I426 each contribute to the CoA site. K435 carries the N6-acetyllysine modification. Residue K440 is modified to N6-acetyllysine; alternate. K440 bears the N6-succinyllysine; alternate mark. Active-site residues include H452 and D456.

This sequence belongs to the 2-oxoacid dehydrogenase family. Forms a 24-polypeptide structural core with octahedral symmetry that represents the E2 component of the branched-chain alpha-ketoacid dehydrogenase (BCKDH) complex. The BCKDH complex is composed of three major building blocks E1, E2 and E3. It is organized around E2, a 24-meric cubic core composed of DBT, to which are associated 6 to 12 copies of E1, and approximately 6 copies of the dehydrogenase E3, a DLD dimer. Interacts with PPM1K with a 24:1 stoichiometry; the N-terminal region (residues 49-61) of PPM1K and C-terminal linker of the lipoyl domain of DBT/E2 (residues 145-160) are critical for this interaction whereas the lipoyl prosthetic group is dispensable. This interaction requires colocalization in mitochondria. PPM1K competes with BCKDK for binding to DBT; this interaction is modulated by branched-chain alpha-keto acids (BCKAs). At steady state, BCKDH holoenzyme preferentially binds BCKDK and BCKDHA is phosphorylated. In response to high levels of BCKAs, BCKDK is replaced by PPM1K leading to BCKDHA dephosphorylation. It depends on (R)-lipoate as a cofactor.

The protein resides in the mitochondrion matrix. It carries out the reaction N(6)-[(R)-dihydrolipoyl]-L-lysyl-[protein] + 2-methylpropanoyl-CoA = N(6)-[(R)-S(8)-2-methylpropanoyldihydrolipoyl]-L-lysyl-[protein] + CoA. Its function is as follows. The branched-chain alpha-keto dehydrogenase complex catalyzes the overall conversion of alpha-keto acids to acyl-CoA and CO(2). It contains multiple copies of three enzymatic components: branched-chain alpha-keto acid decarboxylase (E1), lipoamide acyltransferase (E2) and lipoamide dehydrogenase (E3). Within this complex, the catalytic function of this enzyme is to accept, and to transfer to coenzyme A, acyl groups that are generated by the branched-chain alpha-keto acid decarboxylase component. The sequence is that of Lipoamide acyltransferase component of branched-chain alpha-keto acid dehydrogenase complex, mitochondrial (Dbt) from Mus musculus (Mouse).